Here is a 173-residue protein sequence, read N- to C-terminus: GTP-dependent dephospho-CoA kinase (173 aa).

GTP-binding residues include D52, V53, V54, D71, K73, and D122.

Belongs to the GTP-dependent DPCK family.

The enzyme catalyses 3'-dephospho-CoA + GTP = GDP + CoA + H(+). It functions in the pathway cofactor biosynthesis; coenzyme A biosynthesis. Its function is as follows. Catalyzes the GTP-dependent phosphorylation of the 3'-hydroxyl group of dephosphocoenzyme A to form coenzyme A (CoA). The sequence is that of GTP-dependent dephospho-CoA kinase from Metallosphaera sedula (strain ATCC 51363 / DSM 5348 / JCM 9185 / NBRC 15509 / TH2).